We begin with the raw amino-acid sequence, 94 residues long: uncharacterized protein (94 aa).

This is an uncharacterized protein from Bacillus subtilis (strain 168).